The chain runs to 725 residues: Eukaryotic elongation factor 2 kinase (725 aa).

Basic and acidic residues predominate over residues 1–12; the sequence is MADEDLIFRLEG. The tract at residues 1-38 is disordered; it reads MADEDLIFRLEGVDGGQSPRAGHDGDSDGDSDDEEGYF. Ala2 is subject to N-acetylalanine. Phosphoserine occurs at positions 18 and 27. The span at 27 to 36 shows a compositional bias: acidic residues; it reads SDGDSDDEEG. Ser61 and Ser66 each carry phosphoserine; by autocatalysis. 4 positions are modified to phosphoserine: Ser70, Ser71, Ser72, and Ser74. Ser78 bears the Phosphoserine; by autocatalysis and TRPM7 mark. Residues 81–94 are calmodulin-binding; the sequence is FKEAWKHAIQKAKH. The Alpha-type protein kinase domain maps to 116–326; it reads RYNAVTGEWL…ICESMGLAPF (211 aa). Ser243 carries the phosphoserine modification. 296-302 serves as a coordination point for ATP; it reads GDGNLGV. A phosphothreonine; by autocatalysis mark is found at Thr348 and Thr353. Disordered regions lie at residues 352-405 and 423-477; these read GTEE…PHSQ and SRDH…SLGS. Phosphoserine; by MAPK13 and CDK1 is present on Ser359. The span at 363–377 shows a compositional bias: low complexity; that stretch reads RTLSGSRPPLLRPLS. Ser366 is modified (phosphoserine; by autocatalysis, RPS6KA1 and RPS6KB1). Polar residues predominate over residues 386–404; sequence SDVTFDSLPSSPSSATPHS. Ser392 carries the phosphoserine modification. Phosphoserine; by AMPK is present on Ser398. Composition is skewed to basic and acidic residues over residues 423 to 436 and 445 to 469; these read SRDHDHLDNHRESE and SEKRGELDDPEPREHGHSYSNRKYE. Ser435 carries the phosphoserine modification. Ser445 is modified (phosphoserine; by autocatalysis). At Ser470 the chain carries Phosphoserine. Ser474 is modified (phosphoserine; by autocatalysis). Ser477 is subject to Phosphoserine. At Ser491 the chain carries Phosphoserine; by autocatalysis. At Ser500 the chain carries Phosphoserine; by PKA.

It belongs to the protein kinase superfamily. Alpha-type protein kinase family. As to quaternary structure, monomer or homodimer. Interacts with Calmodulin/CALM1; this interaction is strictly required for phosphorylation activity. Post-translationally, autophosphorylated at multiple residues, Thr-348 being the major site. Phosphorylated by AMP-activated protein kinase AMPK at Ser-398 leading to EEF2K activation and protein synthesis inhibition. Phosphorylated by TRPM7 at Ser-78 resulting in improved protein stability, higher EE2F phosphorylated and subsequently reduced rate of protein synthesis. Phosphorylation by other kinases such as CDK1 and MAPK13 at Ser-359 or RPS6KA1 and RPS6KB1 at Ser-366 instead decrease EEF2K activity and promote protein synthesis.

It catalyses the reaction [translation elongation factor 2] + ATP = [translation elongation factor 2]-phosphate + ADP + H(+). Undergoes calcium/calmodulin-dependent intramolecular autophosphorylation, and this results in it becoming partially calcium/calmodulin-independent. In terms of biological role, threonine kinase that regulates protein synthesis by controlling the rate of peptide chain elongation. Upon activation by a variety of upstream kinases including AMPK or TRPM7, phosphorylates the elongation factor EEF2 at a single site, renders it unable to bind ribosomes and thus inactive. In turn, the rate of protein synthesis is reduced. In Homo sapiens (Human), this protein is Eukaryotic elongation factor 2 kinase (EEF2K).